Consider the following 256-residue polypeptide: Sorbitol dehydrogenase (256 aa).

NAD(+)-binding positions include 15–17 (RGI), Asp36, 59–60 (DV), Asn86, Tyr152, Lys156, and 182–187 (PGVVDG). Tyr152 serves as the catalytic Proton acceptor.

This sequence belongs to the short-chain dehydrogenases/reductases (SDR) family. In terms of assembly, homodimer. May function as a tetramer in vivo.

It carries out the reaction keto-D-fructose + NADH + H(+) = D-sorbitol + NAD(+). The enzyme catalyses galactitol + NAD(+) = keto-D-tagatose + NADH + H(+). The catalysed reaction is L-iditol + NAD(+) = keto-L-sorbose + NADH + H(+). Its activity is regulated as follows. Inhibited by DTT, N-bromosuccinimide and iodoacetic acid. In terms of biological role, catalyzes the oxidation of D-sorbitol (D-glucitol) to D-fructose. Can also catalyze the oxidation of galactitol to D-tagatose and the oxidation of L-iditol, with lower efficiency. The chain is Sorbitol dehydrogenase (polS) from Cereibacter sphaeroides (Rhodobacter sphaeroides).